A 469-amino-acid polypeptide reads, in one-letter code: UDP-N-acetylmuramoylalanine--D-glutamate ligase (469 aa).

123 to 129 contacts ATP; that stretch reads GTNGKST.

This sequence belongs to the MurCDEF family.

The protein resides in the cytoplasm. It carries out the reaction UDP-N-acetyl-alpha-D-muramoyl-L-alanine + D-glutamate + ATP = UDP-N-acetyl-alpha-D-muramoyl-L-alanyl-D-glutamate + ADP + phosphate + H(+). The protein operates within cell wall biogenesis; peptidoglycan biosynthesis. Cell wall formation. Catalyzes the addition of glutamate to the nucleotide precursor UDP-N-acetylmuramoyl-L-alanine (UMA). This Caulobacter sp. (strain K31) protein is UDP-N-acetylmuramoylalanine--D-glutamate ligase.